The primary structure comprises 285 residues: MATKLQDGNTPCLAATPSEPRPTVLVFDSGVGGLSVYDEIRHLLPDLHYIYAFDNVAFPYGEKSEAFIVERVVAIVTAVQERYPLALAVVACNTASTVSLPALREKFDFPVVGVVPAIKPAARLTANGIVGLLATRGTVKRSYTHELIARFANECQIEMLGSAEMVELAEAKLHGEDVSLDALKRILRPWLRMKEPPDTVVLGCTHFPLLQEELLQVLPEGTRLVDSGAAIARRTAWLLEHEAPDAKSADANIAFCMAMTPGAEQLLPVLQRYGFETLEKLAVLG.

Residues 28 to 29 (DS) and 60 to 61 (YG) each bind substrate. Cys-92 functions as the Proton donor/acceptor in the catalytic mechanism. 93–94 (NT) contributes to the substrate binding site. Residues Arg-104 and 113-119 (GVVPAIK) each bind UDP-N-acetyl-alpha-D-muramoyl-L-alanine. Catalysis depends on Cys-204, which acts as the Proton donor/acceptor. Substrate is bound at residue 205–206 (TH).

This sequence belongs to the aspartate/glutamate racemases family. In terms of assembly, monomer.

The catalysed reaction is L-glutamate = D-glutamate. The protein operates within cell wall biogenesis; peptidoglycan biosynthesis. The low basal catalytic activity in increased 1000-fold in the presence of UDP-MurNAc-L-Ala, the product of the preceding enzyme in the peptidoglycan biosynthesis. In terms of biological role, provides the (R)-glutamate required for cell wall biosynthesis. This chain is Glutamate racemase, found in Escherichia coli (strain K12).